The sequence spans 189 residues: Isopentenyl-diphosphate Delta-isomerase 2 (189 aa).

Positions 24 and 30 each coordinate Mn(2+). Residues 28-160 enclose the Nudix hydrolase domain; the sequence is ALHRAISIFV…PETYSFWLAA (133 aa). Cys65 is a catalytic residue. Cys65 is a binding site for Mg(2+). Position 67 (His67) interacts with Mn(2+). A Mg(2+)-binding site is contributed by Glu85. Residues Glu110 and Glu112 each contribute to the Mn(2+) site. Residue Glu112 is part of the active site.

The protein belongs to the IPP isomerase type 1 family. Mg(2+) is required as a cofactor. Requires Mn(2+) as cofactor.

The protein resides in the cytoplasm. The catalysed reaction is isopentenyl diphosphate = dimethylallyl diphosphate. It functions in the pathway isoprenoid biosynthesis; dimethylallyl diphosphate biosynthesis; dimethylallyl diphosphate from isopentenyl diphosphate: step 1/1. Its function is as follows. Catalyzes the 1,3-allylic rearrangement of the homoallylic substrate isopentenyl (IPP) to its highly electrophilic allylic isomer, dimethylallyl diphosphate (DMAPP). This Aromatoleum aromaticum (strain DSM 19018 / LMG 30748 / EbN1) (Azoarcus sp. (strain EbN1)) protein is Isopentenyl-diphosphate Delta-isomerase 2.